The chain runs to 40 residues: Conotoxin Bt14.16 (40 aa).

Positions 1–18 (SDGRDAAVIYTESDVIAR) are excised as a propeptide. 2 cysteine pairs are disulfide-bonded: Cys-21–Cys-36 and Cys-24–Cys-29.

Belongs to the conotoxin A superfamily. As to expression, expressed by the venom duct.

It is found in the secreted. Functionally, probable neurotoxin with unknown target. Possibly targets ion channels. The sequence is that of Conotoxin Bt14.16 from Conus betulinus (Beech cone).